The sequence spans 201 residues: Large ribosomal subunit protein bL25 (201 aa).

The protein belongs to the bacterial ribosomal protein bL25 family. CTC subfamily. As to quaternary structure, part of the 50S ribosomal subunit; part of the 5S rRNA/L5/L18/L25 subcomplex. Contacts the 5S rRNA. Binds to the 5S rRNA independently of L5 and L18.

In terms of biological role, this is one of the proteins that binds to the 5S RNA in the ribosome where it forms part of the central protuberance. The sequence is that of Large ribosomal subunit protein bL25 from Burkholderia cenocepacia (strain HI2424).